A 324-amino-acid polypeptide reads, in one-letter code: Granaticin polyketide synthase bifunctional cyclase/dehydratase (324 aa).

Positions 1–21 (MVQPAATPVSLPSPTVHRSEH) are disordered.

The protein operates within antibiotic biosynthesis; granaticin biosynthesis. Functionally, is needed for correct cyclization of the oligoketide leading to isochromanequinone formation. In Streptomyces violaceoruber, this protein is Granaticin polyketide synthase bifunctional cyclase/dehydratase (gra-orf4).